Here is a 207-residue protein sequence, read N- to C-terminus: MNPTSFIYDKPPPPPIINKPFEQTNSSASLTQKNSSSETENVGRHGKRRMDQDLSFKPTKRGSGRGRGRSFRGGSHAGNTRGACAVDGIEYLKRRNISINTPEEIEAWIQERKKNWPTESNIRSKQEKEKVMENLGAADTSQSIDAQPTPSQHPLAHHEPHEKRGPPKKKSLYTKLLNTQLEQENIFFLQFMKLYLKKMGMVVKPVS.

Disordered regions lie at residues 1–81 (MNPT…GNTR) and 140–169 (TSQS…PPKK). The span at 21-40 (FEQTNSSASLTQKNSSSETE) shows a compositional bias: polar residues. Basic residues predominate over residues 58–70 (PTKRGSGRGRGRS). Over residues 140–152 (TSQSIDAQPTPSQ) the composition is skewed to polar residues. Positions 156 to 165 (AHHEPHEKRG) are enriched in basic and acidic residues.

It localises to the nucleus. It is found in the nucleolus. This is an uncharacterized protein from Schizosaccharomyces pombe (strain 972 / ATCC 24843) (Fission yeast).